The chain runs to 365 residues: IgG receptor FcRn large subunit p51 (365 aa).

Residues 1–21 (MGMPLPWALSLLLVLLPQTWG) form the signal peptide. An alpha-1 region spans residues 22-110 (SETRPPLMYH…KTLEKILNGT (89 aa)). Over 22 to 297 (SETRPPLMYH…VDLDSSARSS (276 aa)) the chain is Extracellular. N-linked (GlcNAc...) asparagine glycosylation is found at Asn108, Asn125, Asn149, and Asn246. The segment at 111 to 200 (YTLQGLLGCE…ERGRRNLEWK (90 aa)) is alpha-2. Cystine bridges form between Cys119-Cys182 and Cys221-Cys275. The segment at 201–290 (EPPSMRLKAR…GLAQPLTVDL (90 aa)) is alpha-3. One can recognise an Ig-like C1-type domain in the interval 202-289 (PPSMRLKARP…EGLAQPLTVD (88 aa)). The tract at residues 291–297 (DSSARSS) is connecting peptide. Residues 298–321 (VPVVGIVLGLLLVVVAIAGGVLLW) form a helical membrane-spanning segment. Over 322 to 365 (GRMRSGLPAPWLSLSGDDSGDLLPGGNLPPEAEPQGANAFPATS) the chain is Cytoplasmic. Phosphoserine is present on Ser334. The interval 343–365 (LLPGGNLPPEAEPQGANAFPATS) is disordered.

Belongs to the immunoglobulin superfamily. FcRn complex consists of two subunits: p51, and p14 which is equivalent to beta-2-microglobulin. It forms an MHC class I-like heterodimer. Interacts with albumin/ALB; this interaction regulates ALB homeostasis. As to expression, intestinal epithelium of suckling rodents. Expressed in neonatal intestine and fetal yolk sac.

It localises to the cell membrane. It is found in the endosome membrane. Cell surface receptor that transfers passive humoral immunity from the mother to the newborn. Binds to the Fc region of monomeric immunoglobulin gamma and mediates its selective uptake from milk. IgG in the milk is bound at the apical surface of the intestinal epithelium. The resultant FcRn-IgG complexes are transcytosed across the intestinal epithelium and IgG is released from FcRn into blood or tissue fluids. Throughout life, contributes to effective humoral immunity by recycling IgG and extending its half-life in the circulation. Mechanistically, monomeric IgG binding to FcRn in acidic endosomes of endothelial and hematopoietic cells recycles IgG to the cell surface where it is released into the circulation. In addition of IgG, regulates homeostasis of the other most abundant circulating protein albumin/ALB. In Mus musculus (Mouse), this protein is IgG receptor FcRn large subunit p51 (Fcgrt).